The chain runs to 339 residues: GTP 3',8-cyclase (339 aa).

In terms of domain architecture, Radical SAM core spans 20 to 241 (NFDRKFEYLR…WTQKQSLSHD (222 aa)). Arginine 29 is a GTP binding site. Residues cysteine 36 and cysteine 40 each contribute to the [4Fe-4S] cluster site. S-adenosyl-L-methionine is bound at residue tyrosine 42. Cysteine 43 contributes to the [4Fe-4S] cluster binding site. Arginine 78 contributes to the GTP binding site. Position 82 (glycine 82) interacts with S-adenosyl-L-methionine. Threonine 109 provides a ligand contact to GTP. Serine 133 provides a ligand contact to S-adenosyl-L-methionine. Lysine 170 contributes to the GTP binding site. Methionine 204 lines the S-adenosyl-L-methionine pocket. Positions 267 and 270 each coordinate [4Fe-4S] cluster. Position 272–274 (272–274 (RLR)) interacts with GTP. Cysteine 284 contributes to the [4Fe-4S] cluster binding site.

This sequence belongs to the radical SAM superfamily. MoaA family. Monomer and homodimer. [4Fe-4S] cluster is required as a cofactor.

It catalyses the reaction GTP + AH2 + S-adenosyl-L-methionine = (8S)-3',8-cyclo-7,8-dihydroguanosine 5'-triphosphate + 5'-deoxyadenosine + L-methionine + A + H(+). The protein operates within cofactor biosynthesis; molybdopterin biosynthesis. Its function is as follows. Catalyzes the cyclization of GTP to (8S)-3',8-cyclo-7,8-dihydroguanosine 5'-triphosphate. In Psychromonas ingrahamii (strain DSM 17664 / CCUG 51855 / 37), this protein is GTP 3',8-cyclase.